We begin with the raw amino-acid sequence, 236 residues long: MALPAGPADAICALCQRAPREPVRADCGHRFCRACVVRFWAEEDGPFPCPECADDCWQRAVEPSRPPLSRRLLALEEAAAAPARDGPASEAALQLLCRADGDPLCSACRMAAGPEPPEWEPRWRKALRGKENKGSVEIMRKDLNDARDLHGQAESAAAVWKGHVMDRRKKALTDYKKLRAFFVEEEEHFLQEAEKDEGASEDDELADPADRFRSLLQAVSELEKKHRNLGLSMLLQ.

The RING-type zinc-finger motif lies at 12-53 (CALCQRAPREPVRADCGHRFCRACVVRFWAEEDGPFPCPECA). Asymmetric dimethylarginine; by PRMT1 is present on residues arginine 98 and arginine 109. Lysine 195 participates in a covalent cross-link: Glycyl lysine isopeptide (Lys-Gly) (interchain with G-Cter in ubiquitin). Serine 200 carries the post-translational modification Phosphoserine. Glycyl lysine isopeptide (Lys-Gly) (interchain with G-Cter in ubiquitin) cross-links involve residues lysine 224 and lysine 225.

Homodimer. Interacts with JUN, independently of JUN phosphorylation. Interacts (via C-terminus) with TRIM7. Ubiquitinated; undergoes 'Lys-48'-linked autoubiquitination in the absence of growth factors and MAP3K1-induced 'Lys-63'-linked polyubiquitination. 'Lys-48'-autoubiquitination leads to degradation by the proteasome, while MAP3K1-induced 'Lys-63'-linked polyubiquitination results in the stabilization of the protein. 'Lys-48'- and 'Lys-63'-linked polyubiquitinations occur most probably on the same 3 C-terminal lysine residues (Lys-195, Lys-224 and Lys-225) and are thus mutually exclusive. Other sites of ubiquitination are not excluded. 'Lys-63'-linked polyubiquitination by TRIM7 in response to growth factor signaling via the MEK/ERK pathway enhances protein stability. Post-translationally, arginine methylation by PRMT1 stabilizes RNF187 by facilitating K63-linked ubiquitin chain formation, and enables dimerization, c-Jun interaction and subsequent AP1 target gene expression.

It is found in the cytoplasm. Its subcellular location is the nucleus. It carries out the reaction S-ubiquitinyl-[E2 ubiquitin-conjugating enzyme]-L-cysteine + [acceptor protein]-L-lysine = [E2 ubiquitin-conjugating enzyme]-L-cysteine + N(6)-ubiquitinyl-[acceptor protein]-L-lysine.. It functions in the pathway protein modification; protein ubiquitination. In terms of biological role, E3 ubiquitin-protein ligase that acts as a coactivator of JUN-mediated gene activation in response to growth factor signaling via the MAP3K1 pathway, independently from MAPK8. This chain is E3 ubiquitin-protein ligase RNF187 (Rnf187), found in Mus musculus (Mouse).